Here is a 296-residue protein sequence, read N- to C-terminus: MSAANPETPNSTISREANTQSSSAATSQGYVLPEGKIMPNTVFVGGIDVRMDETEIRGFFARYGSVKEVKIITDRTGVSKGYGFVSFFNDVDVQKIVESQINFHGKKLKLGPAIRKQNLCAYHVQPRPLVFNHPPPPQFQNVWSNPNTETYMHPPTTMNPVTQYVQAYPPYPNSPVQVITGYQLPVYNYQMPPQWPVGEQRSYVVPPAYSSVNYYCNEIDPGAEVVPNECSVCEATPPSGNGPQKKSVDRSIQTVVSCLFNPENSRLRNSVVTQDDYFRDKRVHHFRRSRAVLKSV.

Residues 1 to 18 show a composition bias toward polar residues; that stretch reads MSAANPETPNSTISREAN. The segment at 1 to 25 is disordered; sequence MSAANPETPNSTISREANTQSSSAA. Residues 40–115 form the RRM domain; that stretch reads NTVFVGGIDV…KKLKLGPAIR (76 aa). Residues 80–132 are homodimerization; sequence KGYGFVSFFNDVDVQKIVESQINFHGKKLKLGPAIRKQNLCAYHVQPRPLVFN. Residues 167-190 form the DAZ domain; sequence AYPPYPNSPVQVITGYQLPVYNYQ. Phosphotyrosine is present on Y277.

The protein belongs to the RRM DAZ family. As to quaternary structure, homodimer and heterodimer. Forms a heterodimer with DAZ. Interacts with BOLL, DAZAP1 and DAZAP2. Interacts with PUM2 Multiple DAZL RRMs can bind to a single RNA containing multiple GUU triplets. Testis specific.

It localises to the cytoplasm. The protein localises to the nucleus. Its function is as follows. RNA-binding protein, which is essential for gametogenesis in both males and females. Plays a central role during spermatogenesis. Acts by binding to the 3'-UTR of mRNA, specifically recognizing GUU triplets, and thereby regulating the translation of key transcripts. The chain is Deleted in azoospermia-like (DAZL) from Callithrix jacchus (White-tufted-ear marmoset).